The chain runs to 402 residues: Phosphoribulokinase, chloroplastic (402 aa).

The transit peptide at 1–51 (MAVCTVYTIPTTTHLGSSFNQNNKQVFFNYKRSSSSNNTLFTTRPSYVITC) directs the protein to the chloroplast. A disulfide bridge connects residues Cys67 and Cys106.

The protein belongs to the phosphoribulokinase family.

It is found in the plastid. The protein localises to the chloroplast. The enzyme catalyses D-ribulose 5-phosphate + ATP = D-ribulose 1,5-bisphosphate + ADP + H(+). It participates in carbohydrate biosynthesis; Calvin cycle. Light regulated via thioredoxin by reversible oxidation/reduction of sulfhydryl/disulfide groups. The chain is Phosphoribulokinase, chloroplastic from Spinacia oleracea (Spinach).